Consider the following 413-residue polypeptide: S-adenosylmethionine synthase (413 aa).

Residue His-15 participates in ATP binding. Mg(2+) is bound at residue Asp-17. A K(+)-binding site is contributed by Glu-43. Residues Glu-56 and Gln-100 each coordinate L-methionine. Positions 100–110 (QSPDISQGVND) are flexible loop. Residues 171 to 173 (DGK), 248 to 249 (KF), Asp-257, 263 to 264 (RK), Ala-280, and Lys-284 each bind ATP. Asp-257 contributes to the L-methionine binding site. Lys-288 contacts L-methionine.

It belongs to the AdoMet synthase family. Homotetramer; dimer of dimers. Mg(2+) is required as a cofactor. Requires K(+) as cofactor.

Its subcellular location is the cytoplasm. The enzyme catalyses L-methionine + ATP + H2O = S-adenosyl-L-methionine + phosphate + diphosphate. It participates in amino-acid biosynthesis; S-adenosyl-L-methionine biosynthesis; S-adenosyl-L-methionine from L-methionine: step 1/1. Its function is as follows. Catalyzes the formation of S-adenosylmethionine (AdoMet) from methionine and ATP. The overall synthetic reaction is composed of two sequential steps, AdoMet formation and the subsequent tripolyphosphate hydrolysis which occurs prior to release of AdoMet from the enzyme. This Prochlorococcus marinus (strain MIT 9301) protein is S-adenosylmethionine synthase.